A 75-amino-acid chain; its full sequence is UPF0352 protein CKO_00587 (75 aa).

Belongs to the UPF0352 family.

The chain is UPF0352 protein CKO_00587 from Citrobacter koseri (strain ATCC BAA-895 / CDC 4225-83 / SGSC4696).